Consider the following 456-residue polypeptide: Asparagine--tRNA ligase (456 aa).

The protein belongs to the class-II aminoacyl-tRNA synthetase family. As to quaternary structure, homodimer.

The protein localises to the cytoplasm. It catalyses the reaction tRNA(Asn) + L-asparagine + ATP = L-asparaginyl-tRNA(Asn) + AMP + diphosphate + H(+). The polypeptide is Asparagine--tRNA ligase (Mycoplasma genitalium (strain ATCC 33530 / DSM 19775 / NCTC 10195 / G37) (Mycoplasmoides genitalium)).